A 195-amino-acid chain; its full sequence is MLPPALNIPKWLEANSHLLQPPVNNYCVYHPSSPATSGYTVMIVGGPNARTDYHINSTPEFFYQYRGSMLLRTVDRSVSPPAFQDIPIHEGSLFLLPANTPHCPVRFADTVGVVMEVPRAPDATDTMLWFCPNSACKQVVWEKRFVCTDLGTQVKEVVEEFSADLAKRTCAACGTVAESRYKEGELTQPPRFPPE.

Arginine 50 lines the O2 pocket. Residues histidine 54, glutamate 60, and histidine 102 each coordinate Fe cation. Residue glutamate 60 coordinates substrate. Positions 106 and 116 each coordinate substrate. Residues cysteine 131, cysteine 136, cysteine 170, and cysteine 173 each coordinate a divalent metal cation.

This sequence belongs to the 3-HAO family. Requires Fe(2+) as cofactor.

It localises to the cytoplasm. It carries out the reaction 3-hydroxyanthranilate + O2 = (2Z,4Z)-2-amino-3-carboxymuconate 6-semialdehyde. It participates in cofactor biosynthesis; NAD(+) biosynthesis; quinolinate from L-kynurenine: step 3/3. Its function is as follows. Catalyzes the oxidative ring opening of 3-hydroxyanthranilate to 2-amino-3-carboxymuconate semialdehyde, which spontaneously cyclizes to quinolinate. This chain is 3-hydroxyanthranilate 3,4-dioxygenase (bna1), found in Aspergillus terreus (strain NIH 2624 / FGSC A1156).